Here is a 204-residue protein sequence, read N- to C-terminus: Peptidyl-tRNA hydrolase 2 (204 aa).

A tRNA-binding site is contributed by Tyr-37. His-42 functions as the Proton acceptor in the catalytic mechanism. TRNA contacts are provided by Phe-86, Asn-88, and Asn-134.

The protein belongs to the PTH family. In terms of assembly, monomer.

It is found in the cytoplasm. The enzyme catalyses an N-acyl-L-alpha-aminoacyl-tRNA + H2O = an N-acyl-L-amino acid + a tRNA + H(+). Hydrolyzes ribosome-free peptidyl-tRNAs (with 1 or more amino acids incorporated), which drop off the ribosome during protein synthesis, or as a result of ribosome stalling. Functionally, catalyzes the release of premature peptidyl moieties from peptidyl-tRNA molecules trapped in stalled 50S ribosomal subunits, and thus maintains levels of free tRNAs and 50S ribosomes. This is Peptidyl-tRNA hydrolase 2 from Corynebacterium glutamicum (strain ATCC 13032 / DSM 20300 / JCM 1318 / BCRC 11384 / CCUG 27702 / LMG 3730 / NBRC 12168 / NCIMB 10025 / NRRL B-2784 / 534).